A 626-amino-acid polypeptide reads, in one-letter code: DNA topoisomerase 4 subunit A (626 aa).

Residues 24–439 form the Topo IIA-type catalytic domain; the sequence is IASVVDGFKP…RGYSINFIDL (416 aa). The active-site O-(5'-phospho-DNA)-tyrosine intermediate is Tyr105.

This sequence belongs to the type II topoisomerase GyrA/ParC subunit family. Heterotetramer composed of ParC and ParE.

It localises to the cell membrane. The enzyme catalyses ATP-dependent breakage, passage and rejoining of double-stranded DNA.. Functionally, topoisomerase IV is essential for chromosome segregation. It relaxes supercoiled DNA. Performs the decatenation events required during the replication of a circular DNA molecule. The protein is DNA topoisomerase 4 subunit A (parC) of Borreliella burgdorferi (strain ATCC 35210 / DSM 4680 / CIP 102532 / B31) (Borrelia burgdorferi).